The primary structure comprises 422 residues: UDP-N-acetylglucosamine 1-carboxyvinyltransferase (422 aa).

Residue 22-23 (KN) coordinates phosphoenolpyruvate. Arg92 lines the UDP-N-acetyl-alpha-D-glucosamine pocket. Residue Cys116 is the Proton donor of the active site. Cys116 is modified (2-(S-cysteinyl)pyruvic acid O-phosphothioketal). UDP-N-acetyl-alpha-D-glucosamine is bound by residues 121–125 (RPIDL), Asp307, and Leu329.

Belongs to the EPSP synthase family. MurA subfamily.

It is found in the cytoplasm. The enzyme catalyses phosphoenolpyruvate + UDP-N-acetyl-alpha-D-glucosamine = UDP-N-acetyl-3-O-(1-carboxyvinyl)-alpha-D-glucosamine + phosphate. The protein operates within cell wall biogenesis; peptidoglycan biosynthesis. In terms of biological role, cell wall formation. Adds enolpyruvyl to UDP-N-acetylglucosamine. In Sulfurovum sp. (strain NBC37-1), this protein is UDP-N-acetylglucosamine 1-carboxyvinyltransferase.